The primary structure comprises 203 residues: Protein GrpE (203 aa).

Positions 1–10 (MSNESIKAEQ) are enriched in basic and acidic residues. A disordered region spans residues 1-20 (MSNESIKAEQDLIQEGVESE).

This sequence belongs to the GrpE family. Homodimer.

The protein resides in the cytoplasm. Functionally, participates actively in the response to hyperosmotic and heat shock by preventing the aggregation of stress-denatured proteins, in association with DnaK and GrpE. It is the nucleotide exchange factor for DnaK and may function as a thermosensor. Unfolded proteins bind initially to DnaJ; upon interaction with the DnaJ-bound protein, DnaK hydrolyzes its bound ATP, resulting in the formation of a stable complex. GrpE releases ADP from DnaK; ATP binding to DnaK triggers the release of the substrate protein, thus completing the reaction cycle. Several rounds of ATP-dependent interactions between DnaJ, DnaK and GrpE are required for fully efficient folding. This Shewanella sp. (strain MR-7) protein is Protein GrpE.